A 69-amino-acid chain; its full sequence is Large ribosomal subunit protein uL29 (69 aa).

Belongs to the universal ribosomal protein uL29 family.

This is Large ribosomal subunit protein uL29 from Synechococcus sp. (strain CC9902).